A 273-amino-acid polypeptide reads, in one-letter code: Putative pyruvate, phosphate dikinase regulatory protein (273 aa).

Position 153–160 (153–160 (GVSRTSKS)) interacts with ADP.

It belongs to the pyruvate, phosphate/water dikinase regulatory protein family. PDRP subfamily.

It carries out the reaction N(tele)-phospho-L-histidyl/L-threonyl-[pyruvate, phosphate dikinase] + ADP = N(tele)-phospho-L-histidyl/O-phospho-L-threonyl-[pyruvate, phosphate dikinase] + AMP + H(+). The enzyme catalyses N(tele)-phospho-L-histidyl/O-phospho-L-threonyl-[pyruvate, phosphate dikinase] + phosphate + H(+) = N(tele)-phospho-L-histidyl/L-threonyl-[pyruvate, phosphate dikinase] + diphosphate. Functionally, bifunctional serine/threonine kinase and phosphorylase involved in the regulation of the pyruvate, phosphate dikinase (PPDK) by catalyzing its phosphorylation/dephosphorylation. The polypeptide is Putative pyruvate, phosphate dikinase regulatory protein (Ehrlichia ruminantium (strain Welgevonden)).